Consider the following 535-residue polypeptide: High affinity immunoglobulin alpha and immunoglobulin mu Fc receptor (535 aa).

The N-terminal stretch at 1 to 35 (MDQGAPAKPSEQKVPSLRTRWEILLLTLCLLHGSS) is a signal peptide. The Extracellular segment spans residues 36-455 (MTPPHRRSHS…ALMEGESHTR (420 aa)). Residues 95 to 117 (GGAVTIHCHYAPSSVNRHQRKYW) form a mediates immunoglobulin Fc fragment-binding region. Residues 95 to 189 (GGAVTIHCHY…DMLFFSVNLT (95 aa)) form the Ig-like V-type domain. Cysteine 102 and cysteine 173 are oxidised to a cystine. Residue asparagine 187 is glycosylated (N-linked (GlcNAc...) asparagine). Disordered regions lie at residues 201–360 (AAPA…LISE) and 405–430 (EGRS…QLSV). Low complexity-rich tracts occupy residues 208–220 (PTTA…SSAG) and 241–253 (TVPT…TTSS). Residues 291 to 328 (KSRSMSSTTQGVWLWSTRNSVTPSVTTSEGRRQGTTPE) show a composition bias toward polar residues. A compositionally biased stretch (basic and acidic residues) spans 330 to 346 (DGPRDETDVRVSPEAPR). Over residues 413 to 429 (LENTTEESSPPTPSQLS) the composition is skewed to polar residues. A helical membrane pass occupies residues 456-476 (ILTPVSTVLALLLIAALILLK). Residues 477 to 535 (RSLGRQRTSQKKERVPRITLIQMTHFLPDKLPDEGKNFQQSNLLPPQASLTVLENDPRP) lie on the Cytoplasmic side of the membrane. The disordered stretch occupies residues 507-535 (LPDEGKNFQQSNLLPPQASLTVLENDPRP). Positions 513 to 528 (NFQQSNLLPPQASLTV) are enriched in polar residues.

In terms of assembly, interacts with IGHM; this interaction facilitates the endocytosis of IgM-coated microbes and IgM-antigen immune complexes. Post-translationally, N-glycosylated. As to expression, expressed in several tissues including thymus, spleen, liver, kidney, small and large intestine, testis and placenta. Expressed by oligodendrocytes, B-cells and macrophages but not granulocytes, T-cells or NK cells (at protein level).

It localises to the cell membrane. In terms of biological role, functions as a receptor for the Fc fragment of IgA and IgM. Binds IgA and IgM with high affinity and mediates their endocytosis. May function in the immune response to microbes mediated by IgA and IgM. This Mus musculus (Mouse) protein is High affinity immunoglobulin alpha and immunoglobulin mu Fc receptor (Fcamr).